Here is a 170-residue protein sequence, read N- to C-terminus: Cilia- and flagella-associated protein 276 (170 aa).

Disordered stretches follow at residues 1 to 37 and 151 to 170; these read MPLT…PTHL and HTAA…FFST.

Microtubule inner protein component of sperm flagellar doublet microtubules. Expressed in trachea multiciliated cells.

It localises to the cytoplasm. Its subcellular location is the cytoskeleton. It is found in the cilium axoneme. The protein localises to the flagellum axoneme. Microtubule inner protein (MIP) part of the dynein-decorated doublet microtubules (DMTs) in cilia axoneme, which is required for motile cilia beating. May play an important role for the maintenance of myelin-axon integrity. May affect intracellular Ca(2+) homeostasis. The chain is Cilia- and flagella-associated protein 276 from Bos taurus (Bovine).